The chain runs to 134 residues: D-ribose pyranase (134 aa).

Catalysis depends on H20, which acts as the Proton donor. Substrate contacts are provided by residues D28, H101, and 123–125 (YCN).

This sequence belongs to the RbsD / FucU family. RbsD subfamily. In terms of assembly, homodecamer.

The protein resides in the cytoplasm. It carries out the reaction beta-D-ribopyranose = beta-D-ribofuranose. Its pathway is carbohydrate metabolism; D-ribose degradation; D-ribose 5-phosphate from beta-D-ribopyranose: step 1/2. Catalyzes the interconversion of beta-pyran and beta-furan forms of D-ribose. This chain is D-ribose pyranase, found in Pseudomonas fluorescens (strain Pf0-1).